We begin with the raw amino-acid sequence, 979 residues long: MGDNPFQPKSNSKMAELFMECEEEELEPWQKKVKEVEDDDDDEPIFVGEISSSKPAISNILNRVNPSSYSRGLKNGALSRGITAAFKPTSQHYTNPTSNPVPASPINFHPESRSSDSSVIVQPFSKPGYITNSSRVVSNKSSELLFDLTQDTGLSHYQGGPTLSMAGMSESSFLSKRPSTSEVNNVNPKKPKPSESVSGANSSAVLPSVKSPSVTSSQAMLAKGTNTSSNQSKNGTPFPRACPKCNIHFNLLDPLKNHMKYCCPDMINNFLGLAKTEFSSTVNKNTTIDSEKGKLIMLVNDFYYGKHEGDVQEEQKTHTTFKCFSCLKILKNNIRFMNHMKHHLELEKQSSESWENHTTCQHCYRQFPTPFQLQCHIESTHTPHEFSTICKICELSFETEHVLLQHMKDNHKPGEMPYVCQVCNYRSSSFSDVETHFRTSHENTKNLLCPFCLKVIKIATPYMHHYMKHQKKGIHRCTKCRLQFLTCKEKMDHKTQHHRTFIKPKQLEGLPPGTKVTIRASVGPLQSGASPTPSISASASTLQLSPPRTKNITAKNPAKSNTSKPNTVKSNASKPNTSKPNGSKSKYKPKISNMQKKQSTLASSNKKSKVNTALRNLRYRRGIHKCIECCSEIKDFANHFPTYVHCSFCRYNTSCSKAYVNHMMSFHSNRPSKRFCIFKKHSENLRGITLVCLNCDFLSDVSGLDNMATHLSQHKTHTCQVVMQKVSVCIPTSEHLSELKKEAPAKEQEPVSKEIARPNMAERETETSNSESKQDKAASSKEKNGCNANSFEGSSTTKSEESITVSDKENETCLADQETGSKNIVSCDSNIGADKVEKKKQIQHVCQEMELKMCQSSENIILSDQIKDHNSSEARFSSKNIKDLRLASDNVSIDQFLRKRHEPESVSSDVSEQGSIHLEPLTPSEVLEYEATEILQKGSGDPSAKTDEVVSDQTDDIPGGNNPSTTEATVDLEDEKERS.

Residues Lys-32, Lys-34, Lys-74, and Lys-87 each participate in a glycyl lysine isopeptide (Lys-Gly) (interchain with G-Cter in SUMO2) cross-link. The segment covering 89–101 has biased composition (polar residues); that stretch reads TSQHYTNPTSNPV. Residues 89–119 are disordered; the sequence is TSQHYTNPTSNPVPASPINFHPESRSSDSSV. Ser-104 carries the phosphoserine modification. Residues Lys-126 and Lys-140 each participate in a glycyl lysine isopeptide (Lys-Gly) (interchain with G-Cter in SUMO2) cross-link. Residues 157–236 form a disordered region; sequence YQGGPTLSMA…TSSNQSKNGT (80 aa). The segment covering 169 to 187 has biased composition (polar residues); sequence SESSFLSKRPSTSEVNNVN. Glycyl lysine isopeptide (Lys-Gly) (interchain with G-Cter in SUMO2) cross-links involve residues Lys-189, Lys-210, Lys-223, Lys-233, Lys-275, Lys-284, and Lys-292. The span at 195–235 shows a compositional bias: polar residues; that stretch reads ESVSGANSSAVLPSVKSPSVTSSQAMLAKGTNTSSNQSKNG. 2 C2H2-type zinc fingers span residues 321–343 and 358–381; these read FKCF…MKHH and TTCQ…ESTH. The segment at 388 to 412 adopts a C2H2-type 3; degenerate zinc-finger fold; that stretch reads TICKICELSFETEHVLLQHMKDNHK. C2H2-type zinc fingers lie at residues 418–441 and 449–469; these read YVCQ…RTSH and CPFC…YMKH. Disordered regions lie at residues 523–608, 739–809, and 896–979; these read GPLQ…NKKS, LKKE…SDKE, and FLRK…KERS. Over residues 527–541 the composition is skewed to low complexity; it reads SGASPTPSISASAST. Polar residues-rich tracts occupy residues 542–584 and 592–608; these read LQLS…NGSK and SNMQ…NKKS. Ser-545 is subject to Phosphoserine. Lys-550 is covalently cross-linked (Glycyl lysine isopeptide (Lys-Gly) (interchain with G-Cter in SUMO2)). The span at 739-784 shows a compositional bias: basic and acidic residues; the sequence is LKKEAPAKEQEPVSKEIARPNMAERETETSNSESKQDKAASSKEKN. Lys-740 participates in a covalent cross-link: Glycyl lysine isopeptide (Lys-Gly) (interchain with G-Cter in SUMO2). Residues 786 to 797 show a composition bias toward polar residues; the sequence is CNANSFEGSSTT. Residues 798–809 are compositionally biased toward basic and acidic residues; it reads KSEESITVSDKE. Positions 905–914 are enriched in polar residues; sequence SVSSDVSEQG. Phosphoserine is present on residues Ser-908 and Ser-911. The span at 970 to 979 shows a compositional bias: acidic residues; that stretch reads VDLEDEKERS. A Glycyl lysine isopeptide (Lys-Gly) (interchain with G-Cter in SUMO2) cross-link involves residue Lys-976.

The protein resides in the nucleus. In terms of biological role, may function as a transcription factor. This chain is Zinc finger protein 280D (ZNF280D), found in Homo sapiens (Human).